We begin with the raw amino-acid sequence, 327 residues long: Protein EMSY-LIKE 1 (327 aa).

Positions 1 to 88 (METQIHQLEQ…HATIQPFDVL (88 aa)) constitute an ENT domain. Positions 32-58 (ESLITELRKELRVSDDEHRELLSRVNK) form a coiled coil. Disordered regions lie at residues 206 to 257 (GHGS…SDDI) and 305 to 327 (ADTS…MPQG). The span at 214 to 232 (GNRRGQIHGGRGRGPRIHQ) shows a compositional bias: basic residues. A coiled-coil region spans residues 281-306 (LELDKAKKMLKEHEQALIAAIARLAD). Ser308 bears the Phosphoserine mark. Over residues 318–327 (YSHDHPMPQG) the composition is skewed to basic and acidic residues.

In terms of assembly, isoform 1 interacts with EDM2 in nucleus.

The protein localises to the nucleus. Probably involved in the regulation of chromatin states. Contributes to RPP7-mediated and basal immunity, especially against Hyaloperonospora arabidopsidis isolate Hiks1. Regulates negatively EDM2-dependent floral transition. The polypeptide is Protein EMSY-LIKE 1 (Arabidopsis thaliana (Mouse-ear cress)).